The sequence spans 490 residues: Glutamyl-tRNA(Gln) amidotransferase subunit A (490 aa).

Active-site charge relay system residues include lysine 78 and serine 158. Serine 182 functions as the Acyl-ester intermediate in the catalytic mechanism.

Belongs to the amidase family. GatA subfamily. As to quaternary structure, heterotrimer of A, B and C subunits.

It carries out the reaction L-glutamyl-tRNA(Gln) + L-glutamine + ATP + H2O = L-glutaminyl-tRNA(Gln) + L-glutamate + ADP + phosphate + H(+). Allows the formation of correctly charged Gln-tRNA(Gln) through the transamidation of misacylated Glu-tRNA(Gln) in organisms which lack glutaminyl-tRNA synthetase. The reaction takes place in the presence of glutamine and ATP through an activated gamma-phospho-Glu-tRNA(Gln). In Caulobacter sp. (strain K31), this protein is Glutamyl-tRNA(Gln) amidotransferase subunit A.